A 219-amino-acid polypeptide reads, in one-letter code: uncharacterized protein (219 aa).

Residues 13–32 (VFGLFLFSLIFFGLLSLATF) form a helical membrane-spanning segment.

The protein localises to the membrane. This is an uncharacterized protein from Aquifex aeolicus (strain VF5).